Consider the following 477-residue polypeptide: Putative multidrug resistance protein MdtD (477 aa).

The next 14 membrane-spanning stretches (helical) occupy residues 13 to 33 (LWIV…VNTA), 50 to 70 (SVIV…GWLA), 73 to 93 (VGVQ…SILC), 107 to 127 (VVQG…VMKI), 139 to 159 (FVTL…GFLV), 166 to 186 (WIFL…LLLM), 196 to 216 (FDIS…LALD), 220 to 240 (GMGL…AALA), 268 to 288 (LTAS…TPLF), 291 to 311 (VGMG…IIGS), 326 to 348 (GYRN…FPLV), 352 to 374 (GWIW…RFSA), 394 to 414 (LLSM…GILI), and 432 to 452 (AFIY…LAFA).

The protein belongs to the major facilitator superfamily. TCR/Tet family.

Its subcellular location is the cell inner membrane. This is Putative multidrug resistance protein MdtD from Serratia proteamaculans (strain 568).